We begin with the raw amino-acid sequence, 384 residues long: Deoxyguanosinetriphosphate triphosphohydrolase-like protein (384 aa).

The interval 13-42 is disordered; it reads LASYASDPSKTRGRRHSEPPPENRTEFQRD. Over residues 28–42 the composition is skewed to basic and acidic residues; sequence HSEPPPENRTEFQRD. The HD domain occupies 73-208; it reads RLTHSLEVAQ…ANLADEVAYN (136 aa).

The protein belongs to the dGTPase family. Type 2 subfamily.

The chain is Deoxyguanosinetriphosphate triphosphohydrolase-like protein from Bordetella bronchiseptica (strain ATCC BAA-588 / NCTC 13252 / RB50) (Alcaligenes bronchisepticus).